Reading from the N-terminus, the 477-residue chain is Protein RdxB (477 aa).

Residues 1–29 (MTSPDTQTSSLYAKREPVFPKRVSGKFRS) lie on the Cytoplasmic side of the membrane. Residues 30-50 (LKWWIMGVTLGIYYIAPWLRW) form a helical membrane-spanning segment. The Periplasmic segment spans residues 51–81 (DRGPNLPDQAILVDLANRRFFFFMIEIWPHE). Residues 82–102 (FYFVAGLLIMAGLGLFLFTSA) form a helical membrane-spanning segment. Residues 103–154 (AGRVWCGYACPQTVWTDLFILVERWVEGDRNARIRLLRQRWDLEKTRKYLTK) lie on the Cytoplasmic side of the membrane. A helical membrane pass occupies residues 155 to 175 (WTLWLLIGLATGGAWVFYFTD). Over 176 to 189 (APTLLVDLLTGNAH) the chain is Periplasmic. Residues 190 to 210 (PVAYITMATLTATTFAFGGFA) traverse the membrane as a helical segment. Topologically, residues 211-338 (REQICIYACP…SAWRHVFRLR (128 aa)) are cytoplasmic. The region spanning 253-281 (EPLSPDQGDCIDCMACVNVCPMGIDIRDG) is the 4Fe-4S ferredoxin-type domain. 8 residues coordinate [4Fe-4S] cluster: Cys-262, Cys-265, Cys-268, Cys-272, Cys-286, Cys-289, Cys-292, and Cys-296. Residues 339–359 (TLIYTALWSGVGLALIVALFL) traverse the membrane as a helical segment. Residues 360–477 (RSPIDINVTP…HDTIFNGRGN (118 aa)) lie on the Periplasmic side of the membrane.

The cofactor is [4Fe-4S] cluster.

It localises to the cell membrane. Involved in a membrane generated redox signal; required to maintain repression of photosynthesis gene expression in the presence of oxygen. In Cereibacter sphaeroides (strain ATCC 17023 / DSM 158 / JCM 6121 / CCUG 31486 / LMG 2827 / NBRC 12203 / NCIMB 8253 / ATH 2.4.1.) (Rhodobacter sphaeroides), this protein is Protein RdxB (rdxB).